An 857-amino-acid chain; its full sequence is DNA mismatch repair protein MutS (857 aa).

Position 608-615 (608-615) interacts with ATP; that stretch reads GPNMSGKS.

This sequence belongs to the DNA mismatch repair MutS family.

This protein is involved in the repair of mismatches in DNA. It is possible that it carries out the mismatch recognition step. This protein has a weak ATPase activity. The chain is DNA mismatch repair protein MutS from Lacticaseibacillus casei (strain BL23) (Lactobacillus casei).